The chain runs to 787 residues: Protein translocase subunit SecA (787 aa).

Residues glutamine 85, 103–107 (GEGKT), and aspartate 492 contribute to the ATP site.

This sequence belongs to the SecA family. Monomer and homodimer. Part of the essential Sec protein translocation apparatus which comprises SecA, SecYEG and auxiliary proteins SecDF. Other proteins may also be involved.

Its subcellular location is the cell membrane. The protein localises to the cytoplasm. It catalyses the reaction ATP + H2O + cellular proteinSide 1 = ADP + phosphate + cellular proteinSide 2.. Its function is as follows. Part of the Sec protein translocase complex. Interacts with the SecYEG preprotein conducting channel. Has a central role in coupling the hydrolysis of ATP to the transfer of proteins into and across the cell membrane, serving as an ATP-driven molecular motor driving the stepwise translocation of polypeptide chains across the membrane. The polypeptide is Protein translocase subunit SecA (Limosilactobacillus reuteri (strain DSM 20016) (Lactobacillus reuteri)).